The following is a 179-amino-acid chain: Ribosome maturation factor RimM (179 aa).

In terms of domain architecture, PRC barrel spans 98–170 (PDEFWDRRLR…RIVVSGIPGL (73 aa)).

It belongs to the RimM family. In terms of assembly, binds ribosomal protein uS19.

It localises to the cytoplasm. Functionally, an accessory protein needed during the final step in the assembly of 30S ribosomal subunit, possibly for assembly of the head region. Essential for efficient processing of 16S rRNA. May be needed both before and after RbfA during the maturation of 16S rRNA. It has affinity for free ribosomal 30S subunits but not for 70S ribosomes. This is Ribosome maturation factor RimM from Cutibacterium acnes (strain DSM 16379 / KPA171202) (Propionibacterium acnes).